Here is a 265-residue protein sequence, read N- to C-terminus: Putative Tubby-like protein 4 (265 aa).

The F-box domain occupies 1–44 (MPPELLRDVLMRIERSEDTWPSRKNVVSCVGVCKNWRQIFKEIV). Positions 228 to 250 (SYELKLALYFAKNSAILKKFVLR) constitute an FBD domain.

It belongs to the TUB family.

The protein is Putative Tubby-like protein 4 of Arabidopsis thaliana (Mouse-ear cress).